The primary structure comprises 378 residues: Mannitol-1-phosphate 5-dehydrogenase (378 aa).

4-15 provides a ligand contact to NAD(+); sequence SVHFGAGNIGRG.

The protein belongs to the mannitol dehydrogenase family.

The catalysed reaction is D-mannitol 1-phosphate + NAD(+) = beta-D-fructose 6-phosphate + NADH + H(+). In Streptococcus pneumoniae (strain Hungary19A-6), this protein is Mannitol-1-phosphate 5-dehydrogenase.